The chain runs to 166 residues: Endoribonuclease YbeY (166 aa).

3 residues coordinate Zn(2+): histidine 131, histidine 135, and histidine 141.

It belongs to the endoribonuclease YbeY family. Zn(2+) serves as cofactor.

Its subcellular location is the cytoplasm. Its function is as follows. Single strand-specific metallo-endoribonuclease involved in late-stage 70S ribosome quality control and in maturation of the 3' terminus of the 16S rRNA. This chain is Endoribonuclease YbeY, found in Dehalococcoides mccartyi (strain CBDB1).